The sequence spans 560 residues: Dihydroxy-acid dehydratase (560 aa).

The segment at Met1 to Pro20 is disordered. Cys52 contributes to the [2Fe-2S] cluster binding site. Asp84 contacts Mg(2+). Cys125 contributes to the [2Fe-2S] cluster binding site. Mg(2+)-binding residues include Asp126 and Lys127. Position 127 is an N6-carboxylysine (Lys127). Cys197 contacts [2Fe-2S] cluster. Glu448 is a Mg(2+) binding site. The Proton acceptor role is filled by Ser474.

This sequence belongs to the IlvD/Edd family. In terms of assembly, homodimer. It depends on [2Fe-2S] cluster as a cofactor. The cofactor is Mg(2+).

It catalyses the reaction (2R)-2,3-dihydroxy-3-methylbutanoate = 3-methyl-2-oxobutanoate + H2O. It carries out the reaction (2R,3R)-2,3-dihydroxy-3-methylpentanoate = (S)-3-methyl-2-oxopentanoate + H2O. It participates in amino-acid biosynthesis; L-isoleucine biosynthesis; L-isoleucine from 2-oxobutanoate: step 3/4. Its pathway is amino-acid biosynthesis; L-valine biosynthesis; L-valine from pyruvate: step 3/4. Functions in the biosynthesis of branched-chain amino acids. Catalyzes the dehydration of (2R,3R)-2,3-dihydroxy-3-methylpentanoate (2,3-dihydroxy-3-methylvalerate) into 2-oxo-3-methylpentanoate (2-oxo-3-methylvalerate) and of (2R)-2,3-dihydroxy-3-methylbutanoate (2,3-dihydroxyisovalerate) into 2-oxo-3-methylbutanoate (2-oxoisovalerate), the penultimate precursor to L-isoleucine and L-valine, respectively. The sequence is that of Dihydroxy-acid dehydratase from Leptospira interrogans serogroup Icterohaemorrhagiae serovar copenhageni (strain Fiocruz L1-130).